The sequence spans 75 residues: Large ribosomal subunit protein uL30 (75 aa).

Belongs to the universal ribosomal protein uL30 family. As to quaternary structure, part of the 50S ribosomal subunit.

The polypeptide is Large ribosomal subunit protein uL30 (Roseiflexus castenholzii (strain DSM 13941 / HLO8)).